The chain runs to 587 residues: Glutamine--tRNA ligase (587 aa).

Positions 58 to 68 (PEPNGYLHIGH) match the 'HIGH' region motif. ATP-binding positions include 59–61 (EPN) and 65–71 (HIGHAKS). The L-glutamine site is built by D91 and Y240. ATP is bound by residues T259 and 294 to 295 (RL). The 'KMSKS' region signature appears at 301–305 (VTSKR).

The protein belongs to the class-I aminoacyl-tRNA synthetase family. As to quaternary structure, monomer.

Its subcellular location is the cytoplasm. It carries out the reaction tRNA(Gln) + L-glutamine + ATP = L-glutaminyl-tRNA(Gln) + AMP + diphosphate. The polypeptide is Glutamine--tRNA ligase (Bordetella pertussis (strain Tohama I / ATCC BAA-589 / NCTC 13251)).